The chain runs to 125 residues: Calcitonin receptor-stimulating peptide 1 (125 aa).

The N-terminal stretch at 1 to 25 (MGFWKFPPFLVLSILVLYQAGMFHA) is a signal peptide. Residues 26-77 (APFRSVFDGRFDPATLDEEESRLLLAAMVNDYEQMRARESEKAQKTEGSRIQ) constitute a propeptide that is removed on maturation. Cys81 and Cys86 are oxidised to a cystine.

It belongs to the calcitonin family.

The protein resides in the secreted. Its function is as follows. Stimulates cAMP production in porcine kidney cell line LLC-PK1 via the calcitonin receptor (CT) but not via the CT-like (CL) receptor. This is Calcitonin receptor-stimulating peptide 1 (CRSP1) from Capra hircus (Goat).